The following is a 206-amino-acid chain: Small ribosomal subunit protein uS4 (206 aa).

Positions 96–156 (CRLDNVVYRM…EKAKNQLRIV (61 aa)) constitute an S4 RNA-binding domain.

It belongs to the universal ribosomal protein uS4 family. Part of the 30S ribosomal subunit. Contacts protein S5. The interaction surface between S4 and S5 is involved in control of translational fidelity.

In terms of biological role, one of the primary rRNA binding proteins, it binds directly to 16S rRNA where it nucleates assembly of the body of the 30S subunit. Functionally, with S5 and S12 plays an important role in translational accuracy. The polypeptide is Small ribosomal subunit protein uS4 (Pseudomonas fluorescens (strain ATCC BAA-477 / NRRL B-23932 / Pf-5)).